A 399-amino-acid polypeptide reads, in one-letter code: Acetate kinase 2 (399 aa).

Mg(2+) is bound at residue asparagine 10. Lysine 17 contacts ATP. Residue arginine 89 participates in substrate binding. The active-site Proton donor/acceptor is aspartate 146. ATP-binding positions include histidine 206 to glycine 210, aspartate 281 to arginine 283, and glycine 329 to asparagine 333. Glutamate 384 serves as a coordination point for Mg(2+).

The protein belongs to the acetokinase family. As to quaternary structure, homodimer. Requires Mg(2+) as cofactor. Mn(2+) serves as cofactor.

Its subcellular location is the cytoplasm. It carries out the reaction acetate + ATP = acetyl phosphate + ADP. Its pathway is metabolic intermediate biosynthesis; acetyl-CoA biosynthesis; acetyl-CoA from acetate: step 1/2. Catalyzes the formation of acetyl phosphate from acetate and ATP. Can also catalyze the reverse reaction. The protein is Acetate kinase 2 of Neisseria meningitidis serogroup B (strain ATCC BAA-335 / MC58).